Consider the following 360-residue polypeptide: Josephin-like protein (360 aa).

The Josephin domain maps to 5–192 (ESKIYHERQR…NQLPLASNYR (188 aa)). Cys18 functions as the Nucleophile in the catalytic mechanism. His129 (proton acceptor) is an active-site residue.

The enzyme catalyses Thiol-dependent hydrolysis of ester, thioester, amide, peptide and isopeptide bonds formed by the C-terminal Gly of ubiquitin (a 76-residue protein attached to proteins as an intracellular targeting signal).. Its function is as follows. May act as a deubiquitinating enzyme. The polypeptide is Josephin-like protein (Arabidopsis thaliana (Mouse-ear cress)).